The sequence spans 208 residues: Large ribosomal subunit protein uL4 (208 aa).

A disordered region spans residues 45–89; sequence RQGTHAHKNRSAVSGGGKKPWRQKGTGRARQGSTRSPQWRGGGTV.

It belongs to the universal ribosomal protein uL4 family. Part of the 50S ribosomal subunit.

In terms of biological role, one of the primary rRNA binding proteins, this protein initially binds near the 5'-end of the 23S rRNA. It is important during the early stages of 50S assembly. It makes multiple contacts with different domains of the 23S rRNA in the assembled 50S subunit and ribosome. Functionally, forms part of the polypeptide exit tunnel. The sequence is that of Large ribosomal subunit protein uL4 from Lactococcus lactis subsp. cremoris (strain SK11).